The primary structure comprises 810 residues: Phospholipase D alpha 1 (810 aa).

Positions 1–36 (MAQHLLHGTLHATIYEVDDLHTGGLRSGFFGKILAN) are excised as a propeptide. A C2 domain is found at 1-126 (MAQHLLHGTL…IHGEEVDQWV (126 aa)). Ca(2+) is bound at residue Asp-187. The PLD phosphodiesterase 1 domain occupies 327-366 (AMFTHHQKIVVVDSEMPSRGGSQMRRIVSFVGGIDLCDGR). Active-site residues include His-332, Lys-334, and Asp-339. His-332 contributes to the a 1,2-diacyl-sn-glycero-3-phosphate binding site. His-372 and His-406 together coordinate Ca(2+). A 1,2-diacyl-sn-glycero-3-phosphate is bound by residues Gln-522 and His-661. Residues 656-683 (FMIYVHTKMMIVDDEYIIIGSANINQRS) enclose the PLD phosphodiesterase 2 domain. Active-site residues include His-661, Lys-663, and Asp-668. Glu-722 is a binding site for Ca(2+).

It belongs to the phospholipase D family. C2-PLD subfamily. It depends on Ca(2+) as a cofactor.

The protein resides in the cytoplasm. The protein localises to the membrane. The enzyme catalyses a 1,2-diacyl-sn-glycero-3-phosphocholine + H2O = a 1,2-diacyl-sn-glycero-3-phosphate + choline + H(+). Functionally, hydrolyzes glycerol-phospholipids at the terminal phosphodiesteric bond. Plays an important role in various cellular processes, including phytohormone action, vesicular trafficking, secretion, cytoskeletal arrangement, meiosis, tumor promotion, pathogenesis, membrane deterioration and senescence. This is Phospholipase D alpha 1 (PLD1) from Brassica oleracea var. capitata (Cabbage).